Here is a 611-residue protein sequence, read N- to C-terminus: Brain-enriched guanylate kinase-associated protein (611 aa).

Tyrosine 156 is subject to Phosphotyrosine. Phosphoserine occurs at positions 219, 248, and 265. Position 268 is a phosphothreonine (threonine 268). Phosphoserine occurs at positions 284, 364, and 391. Arginine 399 bears the Asymmetric dimethylarginine mark. 7 positions are modified to phosphoserine: serine 474, serine 484, serine 494, serine 496, serine 519, serine 521, and serine 525. The disordered stretch occupies residues 520–611 (LSPSRSADPL…KAQLYGTLLN (92 aa)). A compositionally biased stretch (basic and acidic residues) spans 554 to 563 (EPEHGSRDSL). Phosphoserine is present on residues serine 571 and serine 581.

Interacts with DLG4 and DLGAP1 and forms a ternary complex. In terms of tissue distribution, brain-specific. Expressed in neurons and rather enriched at synaptic junctions.

The protein localises to the cytoplasm. Its subcellular location is the membrane. Its function is as follows. May sustain the structure of the postsynaptic density (PSD). The protein is Brain-enriched guanylate kinase-associated protein (Begain) of Rattus norvegicus (Rat).